The sequence spans 383 residues: Processive diacylglycerol beta-glucosyltransferase (383 aa).

It belongs to the glycosyltransferase 28 family. UgtP subfamily.

Its subcellular location is the cell membrane. The enzyme catalyses a 1,2-diacyl-3-O-(beta-D-glucopyranosyl)-sn-glycerol + UDP-alpha-D-glucose = a 1,2-diacyl-3-O-(beta-D-Glc-(1-&gt;6)-beta-D-Glc)-sn-glycerol + UDP + H(+). It catalyses the reaction a 1,2-diacyl-3-O-(beta-D-Glc-(1-&gt;6)-beta-D-Glc)-sn-glycerol + UDP-alpha-D-glucose = a 1,2-diacyl-3-O-(beta-D-Glc-(1-&gt;6)-beta-D-Glc-(1-&gt;6)-beta-D-Glc)-sn-glycerol + UDP + H(+). It carries out the reaction a 1,2-diacyl-sn-glycerol + UDP-alpha-D-glucose = a 1,2-diacyl-3-O-(beta-D-glucopyranosyl)-sn-glycerol + UDP + H(+). It functions in the pathway glycolipid metabolism; diglucosyl-diacylglycerol biosynthesis. Processive glucosyltransferase involved in the biosynthesis of both the bilayer- and non-bilayer-forming membrane glucolipids. Is able to successively transfer up to three glucosyl residues to diacylglycerol (DAG), thereby catalyzing the formation of beta-monoglucosyl-DAG (3-O-(beta-D-glucopyranosyl)-1,2-diacyl-sn-glycerol), beta-diglucosyl-DAG (3-O-(beta-D-glucopyranosyl-beta-(1-&gt;6)-D-glucopyranosyl)-1,2-diacyl-sn-glycerol) and beta-triglucosyl-DAG (3-O-(beta-D-glucopyranosyl-beta-(1-&gt;6)-D-glucopyranosyl-beta-(1-&gt;6)-D-glucopyranosyl)-1,2-diacyl-sn-glycerol). Beta-diglucosyl-DAG is the predominant glycolipid found in Bacillales and is also used as a membrane anchor for lipoteichoic acid (LTA). This is Processive diacylglycerol beta-glucosyltransferase from Bacillus pumilus (strain SAFR-032).